The following is a 147-amino-acid chain: Hemoglobin subunit epsilon (147 aa).

The 145-residue stretch at 3-147 folds into the Globin domain; that stretch reads HLTAEEKSSV…VATALAHKYH (145 aa). A phosphoserine mark is found at Ser-14 and Ser-51. Heme b is bound by residues His-64 and His-93.

Belongs to the globin family. In terms of assembly, heterotetramer of two alpha chains and two epsilon chains in early embryonic hemoglobin Gower-2; two zeta chains and two epsilon chains in early embryonic hemoglobin Gower-1. Red blood cells.

The epsilon chain is a beta-type chain of early mammalian embryonic hemoglobin. The polypeptide is Hemoglobin subunit epsilon (HBE1) (Carlito syrichta (Philippine tarsier)).